The sequence spans 693 residues: C6 finger domain transcription factor nscR (693 aa).

The zn(2)-C6 fungal-type DNA-binding region spans 17–43 (CELCRERKVKCDKLDPCTNCSSAGVIC). Residues 589-608 (AANTLSVPHTPPSRSSITSS) are disordered.

It is found in the nucleus. Transcription factor that specifically regulates the neosartoricin B biosynthesis gene cluster. This Trichophyton rubrum (strain ATCC MYA-4607 / CBS 118892) (Athlete's foot fungus) protein is C6 finger domain transcription factor nscR.